The sequence spans 396 residues: Lipid-A-disaccharide synthase (396 aa).

It belongs to the LpxB family.

It carries out the reaction a lipid X + a UDP-2-N,3-O-bis[(3R)-3-hydroxyacyl]-alpha-D-glucosamine = a lipid A disaccharide + UDP + H(+). It functions in the pathway bacterial outer membrane biogenesis; LPS lipid A biosynthesis. Condensation of UDP-2,3-diacylglucosamine and 2,3-diacylglucosamine-1-phosphate to form lipid A disaccharide, a precursor of lipid A, a phosphorylated glycolipid that anchors the lipopolysaccharide to the outer membrane of the cell. In Rhodopseudomonas palustris (strain BisB18), this protein is Lipid-A-disaccharide synthase.